Consider the following 289-residue polypeptide: Aquaporin-2 (289 aa).

The tract at residues 1-36 (MSNESNDLEKNISHLDPTGVDNAYIPPEQPETKHSR) is disordered. The Cytoplasmic portion of the chain corresponds to 1–47 (MSNESNDLEKNISHLDPTGVDNAYIPPEQPETKHSRFNIDRDTLRNH). A helical transmembrane segment spans residues 48 to 68 (FIAAVGEFCGTFMFLWCAYVI). Over 69 to 90 (CNVANHDVALTTEPEGSHPGQL) the chain is Extracellular. A helical membrane pass occupies residues 91–111 (IMIALGFGFSVMFSIWCFAGV). Topologically, residues 112-135 (SGGALNPAVSLSLCLARAISPARC) are cytoplasmic. An NPA 1 motif is present at residues 117 to 119 (NPA). The helical transmembrane segment at 136–156 (VVMWFPQIIAGMAAGGAASAM) threads the bilayer. Residues 157-175 (TPGKVLFTNALGLGCSRSR) are Extracellular-facing. The chain crosses the membrane as a helical span at residues 176–196 (GLFLEMFGTAVLCLTVLMTAV). Over 197–202 (EKRETN) the chain is Cytoplasmic. The helical transmembrane segment at 203–223 (FMAALPIGISLFMAHMALTGY) threads the bilayer. Topologically, residues 224–247 (TGTGVNPARSLGAAVAARYFPHYH) are extracellular. An NPA 2 motif is present at residues 229–231 (NPA). Residues 248–268 (WIYWIGPLLGAFLAWSVWQLL) form a helical membrane-spanning segment. Residues 269–289 (QILDYTTYVNAEKAAGQKKED) lie on the Cytoplasmic side of the membrane.

This sequence belongs to the MIP/aquaporin (TC 1.A.8) family.

It is found in the endoplasmic reticulum membrane. It localises to the cell membrane. Its function is as follows. Water channel required to facilitate the transport of water across membranes. Involved in freeze tolerance, osmotolerance and cell flocculation in liquid cultures. Is non-functional in most laboratory strains. The sequence is that of Aquaporin-2 (AQY2) from Saccharomyces cerevisiae (Baker's yeast).